The sequence spans 66 residues: Large ribosomal subunit protein uL29 (66 aa).

It belongs to the universal ribosomal protein uL29 family.

The sequence is that of Large ribosomal subunit protein uL29 from Agrobacterium fabrum (strain C58 / ATCC 33970) (Agrobacterium tumefaciens (strain C58)).